Here is a 1277-residue protein sequence, read N- to C-terminus: MAIVDDAEMRLTESEAVSSSDDRKIVADTPDFIDESSLVIRTTTGVRISALPAEQSLVDSDGSNSEVTLPAKDEVISDGFTCVNKEIVESDSFREQNLEIGEPDLDVENRKEAMIIDSIENSVVEIVSSASGDDCNVKVEVVEPELLVENLVVAKEEEEMIVDSIEDSVVEIVSTASGCDCNVKVEVVDPELCVDNLVVVKEEEMIADSIAESVVETVSRGLDYECVDVKVKEEPDLGTKLEEDSVFPNVLEKKDEVIKVLEDQPSEINKKLEQENDDLFSSGDSDGTSAKRRKMEMESYAPVGVESCILAPTPLRVVKPEKLDTPEVIDLESEKSYTHVKMEPVEEIKVEAVKMSSQVEDVKFSREQKSVYVKKEPVGARKVKVEDGDFPVEKDWYLVGRSLVTATSTSKGRKLEDNEIVNFTFSSVAKWKVPNIVRFSTKRCGEIGRLPMEWSNWAVSLLRSGKVKMLGRCVAAPPFLTMMQEIMLYVSFYIHSSIFTDVSKSTWRIGSSPNLESTLHPLLQLFKHLTIKPYQKAEFTPEELNSRKRSLNLEDDYDERAALLAIAKRRKGCQQSLEQNKDEEEAPESYMNRVVGAADSYNLEEMEAPSTLTCNLRPYQKQALYWMSESEKGIDVEKAAETLHPCWEAYRICDERAPSIYLNIFSGEATIQFPTATQMARGGILADAMGLGKTVMTIALILARPGRGNPENEDVLVADVNADKRNRKEIHMALTTVKAKGGTLIICPMALLSQWKDELETHSKPDTVSVLVYYGGDRTHDAKAIASHDVVLTTYGVLTSAYKQDMANSIFHRIDWYRIVLDEAHTIKSWKTQAAKATFELSSHCRWCLTGTPLQNKLEDLYSLLCFLHVEPWCNWAWWSKLIQKPYENGDPRGLKLIKAILRPLMLRRTKETRDKEGSLILELPPTDVQVIECEQSEAERDFYTALFKRSKVQFDQFVAQGKVLHNYANILELLLRLRQCCNHPFLVMSRADSQQYADLDSLARRFLDNNPDSVSQNAPSRAYIEEVIQDLRDGNSKECPICLESADDPVLTPCAHRMCRECLLTSWRSPSCGLCPICRTILKRTELISCPTDSIFRVDVVKNWKESSKVSELLKCLEKIKKSGSGEKSIVFSQWTSFLDLLEIPLRRRGFEFLRFDGKLAQKGREKVLKEFNETKQKTILLMSLKAGGVGLNLTAASSVFLMDPWWNPAVEEQAIMRIHRIGQKRTVFVRRFIVKDTVEERMQQVQARKQRMIAGALTDEEVRSARLEELKMLFR.

The tract at residues 271–293 (KLEQENDDLFSSGDSDGTSAKRR) is disordered. Residues 674 to 871 (PTATQMARGG…YSLLCFLHVE (198 aa)) enclose the Helicase ATP-binding domain. 687-694 (DAMGLGKT) serves as a coordination point for ATP. The short motif at 822–825 (DEAH) is the DEAH box element. Residues 1040-1080 (CPICLESADDPVLTPCAHRMCRECLLTSWRSPSCGLCPICR) form an RING-type zinc finger. Positions 1113–1277 (ELLKCLEKIK…RLEELKMLFR (165 aa)) constitute a Helicase C-terminal domain.

It belongs to the SNF2/RAD54 helicase family. RAD16 subfamily.

It localises to the nucleus. Possesses intrinsic ATP-dependent nucleosome-remodeling activity. This activity may be required for DNA repair. Does not seem to be required for DNA repair and regulation of homologous recombination (HR). The chain is DNA repair protein RAD5B from Arabidopsis thaliana (Mouse-ear cress).